We begin with the raw amino-acid sequence, 344 residues long: SAGA complex subunit Sgf73 (344 aa).

Positions 123-143 (NKDVNNGNNAPIKNGVKSTAK) are enriched in polar residues. Residues 123 to 196 (NKDVNNGNNA…KKKNPKVKGP (74 aa)) form a disordered region. The SCA7 domain maps to 190-256 (NPKVKGPVDV…KNQVKIQRQI (67 aa)).

This sequence belongs to the ataxin-7 family. Component of the 1.8 MDa SAGA (Spt-Ada-Gcn5 acetyltransferase) complex, which is composed of 19 subunits tra1, spt7, taf5, ngg1/ada3, sgf73, spt20, spt8, taf12, taf6, hfi1/ada1, ubp8, gcn5, ada2, spt3, sgf29, taf10, taf9, sgf11 and sus1. The SAGA complex is composed of 4 modules, namely the HAT (histone acetyltransferase) module (gcn5, ada2, ngg1/ada3 and sgf29), the DUB (deubiquitinating) module (ubp8, sgf11, sgf73 and sus1), the core or TAF (TBP-associated factor) module (taf5, taf6, taf9, taf10 and taf12), and the Tra1 or SPT (Suppressor of Ty) module (tra1, hfi1/ada1, spt3, spt7, spt8 and spt20). The Tra1/SPT module binds activators, the core module recruits TBP (TATA-binding protein), the HAT module contains the histone H3 acetyltransferase gcn5, and the DUB module comprises the histone H2B deubiquitinase ubp8. Interacts with the RITS subunits ago1 and chp1.

The protein localises to the nucleus. Component of the transcription coactivator SAGA complex. SAGA acts as a general cofactor required for essentially all RNA polymerase II transcription. At the promoters, SAGA is required for transcription pre-initiation complex (PIC) recruitment. It influences RNA polymerase II transcriptional activity through different activities such as TBP interaction (via core/TAF module) and promoter selectivity, interaction with transcription activators (via Tra1/SPT module), and chromatin modification through histone acetylation (via HAT module) and deubiquitination (via DUB module). SAGA preferentially acetylates histones H3 (to form H3K9ac, H3K14ac, H3K18ac and H3K23ac) and H2B and deubiquitinates histone H2B. SAGA interacts with DNA via upstream activating sequences (UASs). Sgf73 tethers the DUB module to the rest of the SAGA complex through its central domain and activates the ubiquitin hydrolase ubp8 by maintaining its catalytic domain in an active conformation. Sgf73 mediates recruitment of the TREX-2 mRNA export factors sac3 and thp1 to SAGA, which is crucial to target TREX-2 to the nuclear pore complex (NPC) necessary for export of mRNA. Upon environmental stress, involved in the bypass of the canonical mRNA export process for the immediate export of stress-related transcripts to maintain proteostasis. Independent on its function in SAGA, promotes the assembly of the RNA-induced transcriptional silencing complex (RITS) and is required for pericentromeric heterochromatin silencing and the generation of siRNA. The sequence is that of SAGA complex subunit Sgf73 (sgf73) from Schizosaccharomyces pombe (strain 972 / ATCC 24843) (Fission yeast).